The primary structure comprises 289 residues: Dihydropteroate synthase (289 aa).

The region spanning 28 to 282 (TYVMGILNTT…DVEAMAQICK (255 aa)) is the Pterin-binding domain. Asn-35 serves as a coordination point for Mg(2+). (7,8-dihydropterin-6-yl)methyl diphosphate contacts are provided by residues Thr-75, Asp-109, Asn-128, Asp-199, Lys-235, and 270-272 (RVH).

It belongs to the DHPS family. Requires Mg(2+) as cofactor.

It catalyses the reaction (7,8-dihydropterin-6-yl)methyl diphosphate + 4-aminobenzoate = 7,8-dihydropteroate + diphosphate. It participates in cofactor biosynthesis; tetrahydrofolate biosynthesis; 7,8-dihydrofolate from 2-amino-4-hydroxy-6-hydroxymethyl-7,8-dihydropteridine diphosphate and 4-aminobenzoate: step 1/2. Functionally, catalyzes the condensation of para-aminobenzoate (pABA) with 6-hydroxymethyl-7,8-dihydropterin diphosphate (DHPt-PP) to form 7,8-dihydropteroate (H2Pte), the immediate precursor of folate derivatives. The sequence is that of Dihydropteroate synthase (folP) from Synechocystis sp. (strain ATCC 27184 / PCC 6803 / Kazusa).